A 342-amino-acid polypeptide reads, in one-letter code: S-adenosylmethionine:tRNA ribosyltransferase-isomerase (342 aa).

It belongs to the QueA family. In terms of assembly, monomer.

It localises to the cytoplasm. It carries out the reaction 7-aminomethyl-7-carbaguanosine(34) in tRNA + S-adenosyl-L-methionine = epoxyqueuosine(34) in tRNA + adenine + L-methionine + 2 H(+). It participates in tRNA modification; tRNA-queuosine biosynthesis. In terms of biological role, transfers and isomerizes the ribose moiety from AdoMet to the 7-aminomethyl group of 7-deazaguanine (preQ1-tRNA) to give epoxyqueuosine (oQ-tRNA). In Bacillus subtilis (strain 168), this protein is S-adenosylmethionine:tRNA ribosyltransferase-isomerase.